The sequence spans 468 residues: IQ domain-containing protein C (468 aa).

The region spanning 6 to 35 (LVLKVTALQACIRGFLVRRQFQSLRGEYEA) is the IQ domain. 3 disordered regions span residues 113-157 (NASS…GPGL), 202-245 (EVNQ…PGEP), and 329-468 (SHKE…GPAG). The span at 139 to 150 (QETRDVSRKNDP) shows a compositional bias: basic and acidic residues. Basic and acidic residues predominate over residues 415–426 (SSIERSPSESSH).

This Bos taurus (Bovine) protein is IQ domain-containing protein C (IQCC).